A 515-amino-acid polypeptide reads, in one-letter code: Fatty acyl-CoA reductase 1 (515 aa).

Residues 1 to 465 lie on the Cytoplasmic side of the membrane; it reads MVSIPEYYEG…ARKHLNKLRN (465 aa). Residues 466 to 483 traverse the membrane as a helical segment; that stretch reads IRYGFNTILVILIWRIFI. The Peroxisomal portion of the chain corresponds to 484–515; sequence ARSQMARNIWYFVVSLCYKFLSYFRASSTMRY.

The protein belongs to the fatty acyl-CoA reductase family.

The protein resides in the peroxisome membrane. It carries out the reaction a long-chain fatty acyl-CoA + 2 NADPH + 2 H(+) = a long-chain primary fatty alcohol + 2 NADP(+) + CoA. It catalyses the reaction hexadecanoyl-CoA + 2 NADPH + 2 H(+) = hexadecan-1-ol + 2 NADP(+) + CoA. The enzyme catalyses octadecanoyl-CoA + 2 NADPH + 2 H(+) = octadecan-1-ol + 2 NADP(+) + CoA. The catalysed reaction is (9Z)-octadecenoyl-CoA + 2 NADPH + 2 H(+) = (9Z)-octadecen-1-ol + 2 NADP(+) + CoA. It carries out the reaction (9Z,12Z)-octadecadienoyl-CoA + 2 NADPH + 2 H(+) = (9Z,12Z)-octadecadien-1-ol + 2 NADP(+) + CoA. It catalyses the reaction eicosanoyl-CoA + 2 NADPH + 2 H(+) = eicosan-1-ol + 2 NADP(+) + CoA. The enzyme catalyses 16-methylheptadecanoyl-CoA + 2 NADPH + 2 H(+) = 16-methylheptadecan-1-ol + 2 NADP(+) + CoA. The catalysed reaction is 18-methylnonadecanoyl-CoA + 2 NADPH + 2 H(+) = 18-methylnonadecan-1-ol + 2 NADP(+) + CoA. In terms of biological role, catalyzes the reduction of saturated and unsaturated C16 or C18 fatty acyl-CoA to fatty alcohols. It plays an essential role in the production of ether lipids/plasmalogens which synthesis requires fatty alcohols. In parallel, it is also required for wax monoesters production since fatty alcohols also constitute a substrate for their synthesis. In Gallus gallus (Chicken), this protein is Fatty acyl-CoA reductase 1.